The chain runs to 510 residues: Ectonucleoside triphosphate diphosphohydrolase 1 (510 aa).

At 1 to 16 (MEDRRESELKTFCSKN) the chain is on the cytoplasmic side. Residues 17–37 (ILVILGFSSIIAVIALLALGL) form a helical membrane-spanning segment. The Extracellular portion of the chain corresponds to 38-477 (TQNKPLPENV…SSTRLSHSTY (440 aa)). The N-linked (GlcNAc...) asparagine glycan is linked to asparagine 73. A disulfide bridge connects residues cysteine 84 and cysteine 108. Catalysis depends on glutamate 174, which acts as the Proton acceptor. Asparagine 245, asparagine 274, asparagine 291, and asparagine 333 each carry an N-linked (GlcNAc...) asparagine glycan. Cystine bridges form between cysteine 255-cysteine 300 and cysteine 281-cysteine 324. A disulfide bond links cysteine 337 and cysteine 342. Asparagine 370 is a glycosylation site (N-linked (GlcNAc...) asparagine). Cysteine 390 and cysteine 413 are joined by a disulfide. An N-linked (GlcNAc...) asparagine glycan is attached at asparagine 457. A helical transmembrane segment spans residues 478 to 498 (VFLMVLFSLILVIVVIIGLFV). Residues 499 to 510 (CHRPSYFWKDMV) are Cytoplasmic-facing.

This sequence belongs to the GDA1/CD39 NTPase family. In terms of assembly, homodimer; disulfide-linked. It depends on Ca(2+) as a cofactor. The cofactor is Mg(2+). Post-translationally, N-glycosylated. In terms of processing, cleaved into two polypeptides that seem to stay together by non-covalent interactions. The N-terminus is blocked. Post-translationally, palmitoylated on Cys-13; which is required for caveola targeting. As to expression, highest expression found in vascular endothelium, smooth muscle, spleen and lung (at protein level). High expression also found in stomach, duodenum, kidney, lymph node and aorta (at protein level).

The protein resides in the membrane. The protein localises to the caveola. The catalysed reaction is a ribonucleoside 5'-triphosphate + 2 H2O = a ribonucleoside 5'-phosphate + 2 phosphate + 2 H(+). It carries out the reaction a ribonucleoside 5'-triphosphate + H2O = a ribonucleoside 5'-diphosphate + phosphate + H(+). The enzyme catalyses a ribonucleoside 5'-diphosphate + H2O = a ribonucleoside 5'-phosphate + phosphate + H(+). It catalyses the reaction ATP + 2 H2O = AMP + 2 phosphate + 2 H(+). The catalysed reaction is ATP + H2O = ADP + phosphate + H(+). It carries out the reaction ADP + H2O = AMP + phosphate + H(+). The enzyme catalyses CTP + 2 H2O = CMP + 2 phosphate + 2 H(+). It catalyses the reaction CTP + H2O = CDP + phosphate + H(+). The catalysed reaction is CDP + H2O = CMP + phosphate + H(+). It carries out the reaction GTP + 2 H2O = GMP + 2 phosphate + 2 H(+). The enzyme catalyses GTP + H2O = GDP + phosphate + H(+). It catalyses the reaction GDP + H2O = GMP + phosphate + H(+). The catalysed reaction is ITP + 2 H2O = IMP + 2 phosphate + 2 H(+). It carries out the reaction ITP + H2O = IDP + phosphate + H(+). The enzyme catalyses IDP + H2O = IMP + phosphate + H(+). It catalyses the reaction UTP + 2 H2O = UMP + 2 phosphate + 2 H(+). The catalysed reaction is UTP + H2O = UDP + phosphate + H(+). It carries out the reaction UDP + H2O = UMP + phosphate + H(+). The ATP diphosphohydrolase activity is decreased by half by sodium azide. In terms of biological role, catalyzes the hydrolysis of both di- and triphosphate nucleotides (NDPs and NTPs) and hydrolyze NTPs to nucleotide monophosphates (NMPs) in two distinct successive phosphate-releasing steps, with NDPs as intermediates and participates in the regulation of extracellular levels of nucleotides. By hydrolyzing proinflammatory ATP and platelet-activating ADP to AMP, it blocks platelet aggregation and supports blood flow. This is Ectonucleoside triphosphate diphosphohydrolase 1 from Sus scrofa (Pig).